Here is a 58-residue protein sequence, read N- to C-terminus: Alpha-conotoxin AuIB (58 aa).

Residues 1–16 (MFTVFLLVVLATTVVS) form the signal peptide. Positions 17 to 39 (FTSDRASDGRKDAASGLIALTMK) are excised as a propeptide. Disulfide bonds link cysteine 41-cysteine 47 and cysteine 42-cysteine 54. Cysteine 54 carries the post-translational modification Cysteine amide.

In terms of tissue distribution, expressed by the venom duct.

The protein resides in the secreted. Alpha-conotoxins act on postsynaptic membranes, they bind to the nicotinic acetylcholine receptors (nAChR) and thus inhibit them. This toxin blocks mammalian nAChR alpha-3-beta-4/CHRNA3-CHRNB4 subunits. Also exhibits inhibition of D.melanogaster alpha-7/CHRNA7 nAChRs. The protein is Alpha-conotoxin AuIB of Conus aulicus (Princely cone).